Here is a 202-residue protein sequence, read N- to C-terminus: Nucleoside triphosphate pyrophosphatase (202 aa).

The active-site Proton acceptor is aspartate 79.

This sequence belongs to the Maf family. The cofactor is a divalent metal cation.

It localises to the cytoplasm. It carries out the reaction a ribonucleoside 5'-triphosphate + H2O = a ribonucleoside 5'-phosphate + diphosphate + H(+). The catalysed reaction is a 2'-deoxyribonucleoside 5'-triphosphate + H2O = a 2'-deoxyribonucleoside 5'-phosphate + diphosphate + H(+). Its function is as follows. Nucleoside triphosphate pyrophosphatase. May have a dual role in cell division arrest and in preventing the incorporation of modified nucleotides into cellular nucleic acids. The protein is Nucleoside triphosphate pyrophosphatase of Rhodopseudomonas palustris (strain BisB18).